The chain runs to 241 residues: 7-cyano-7-deazaguanine synthase (241 aa).

Residue 15–25 (FSGGQDSTTTL) coordinates ATP. Positions 203, 218, 221, and 224 each coordinate Zn(2+).

It belongs to the QueC family. Zn(2+) is required as a cofactor.

It carries out the reaction 7-carboxy-7-deazaguanine + NH4(+) + ATP = 7-cyano-7-deazaguanine + ADP + phosphate + H2O + H(+). It functions in the pathway purine metabolism; 7-cyano-7-deazaguanine biosynthesis. Functionally, catalyzes the ATP-dependent conversion of 7-carboxy-7-deazaguanine (CDG) to 7-cyano-7-deazaguanine (preQ(0)). The sequence is that of 7-cyano-7-deazaguanine synthase from Azorhizobium caulinodans (strain ATCC 43989 / DSM 5975 / JCM 20966 / LMG 6465 / NBRC 14845 / NCIMB 13405 / ORS 571).